A 255-amino-acid polypeptide reads, in one-letter code: Phosphoribosylformylglycinamidine synthase subunit PurQ (255 aa).

Residues 6–255 (TLILRTPGTN…TNAVKWARQV (250 aa)) form the Glutamine amidotransferase type-1 domain. Cys96 serves as the catalytic Nucleophile. Catalysis depends on residues His217 and Glu219.

Part of the FGAM synthase complex composed of 1 PurL, 1 PurQ and 2 PurS subunits.

The protein resides in the cytoplasm. It catalyses the reaction N(2)-formyl-N(1)-(5-phospho-beta-D-ribosyl)glycinamide + L-glutamine + ATP + H2O = 2-formamido-N(1)-(5-O-phospho-beta-D-ribosyl)acetamidine + L-glutamate + ADP + phosphate + H(+). The catalysed reaction is L-glutamine + H2O = L-glutamate + NH4(+). It functions in the pathway purine metabolism; IMP biosynthesis via de novo pathway; 5-amino-1-(5-phospho-D-ribosyl)imidazole from N(2)-formyl-N(1)-(5-phospho-D-ribosyl)glycinamide: step 1/2. In terms of biological role, part of the phosphoribosylformylglycinamidine synthase complex involved in the purines biosynthetic pathway. Catalyzes the ATP-dependent conversion of formylglycinamide ribonucleotide (FGAR) and glutamine to yield formylglycinamidine ribonucleotide (FGAM) and glutamate. The FGAM synthase complex is composed of three subunits. PurQ produces an ammonia molecule by converting glutamine to glutamate. PurL transfers the ammonia molecule to FGAR to form FGAM in an ATP-dependent manner. PurS interacts with PurQ and PurL and is thought to assist in the transfer of the ammonia molecule from PurQ to PurL. In Dehalococcoides mccartyi (strain ATCC BAA-2266 / KCTC 15142 / 195) (Dehalococcoides ethenogenes (strain 195)), this protein is Phosphoribosylformylglycinamidine synthase subunit PurQ.